We begin with the raw amino-acid sequence, 271 residues long: uncharacterized protein (271 aa).

2 disordered regions span residues 50-93 (KKKT…SSSL) and 128-233 (KNNY…RKKV). Low complexity-rich tracts occupy residues 61–93 (SPTKPLSTSIPTTTTAATSQSITSTSLSSSSSL) and 129–165 (NNYNNYNNNNNNNNNNNNNNNNNNNNNNNNNNNNNNN). A compositionally biased stretch (basic and acidic residues) spans 169 to 179 (TDKKEGEKNEN). 2 stretches are compositionally biased toward acidic residues: residues 180 to 199 (ENENENENENENENENDIIE) and 207 to 217 (MDEELENEQVE).

This is an uncharacterized protein from Dictyostelium discoideum (Social amoeba).